The following is a 783-amino-acid chain: MSEMASMDPEGIDGVRMTWNVWPRTKVEASKCVIPVAACISPIRYHRDIPSVEYAPLRCRICTAALNPFARVDFLAKIWICPICFQRNHFPPHYHVMSETNVPCELYPQYTTVEYTLPNPSQPTGVGNFDQTGAVSGQPSPSVFVFVLDTCMIEEEFGYAKSALKQAIGLLPENALVGFVSFGTQAHVHELGFSDLTKVYVFRGDKEISKDQVLEQLGLGASGRRNPVGGFPMGRDNSANFGYSGVNRFLLPASDCEFTIDLLLEELQTDQWPVQAGRRQSRCTGVAISVATGLLGACFPGTGARIVALIGGPCSEGPGTIVSKDLSEPLRSHKDLDKDAAPFYKKAEKFYDALANQLVNQGHVLDLFASALDQVGVAEMKAAVERTGGLVVLSESFGHSVFKDSFKRVFEDGEESLGLCFNGTLEICCSKDIKIQGIIGPCASLQKKGPSVADTVIGEGNTTQWKMCGLDKRTCLTVFFDLSSSDQSSAPGGVNNQLYLQFMTSYQNSKGKTLQRVTTVTRQWVDTGLSTEELVQGFDQETAAVVVARLASLKMETEEGFDATRWLDRNLIRLCSKFGDYRKDDPASFTLNPNFSLFPQFTFNLRRSQFVQVFNNSPDETAYNRMLLNRENISNAAVMIQPSLTTYSFNSLPQPALLDVASIGADRILLLDSYISVVVFHGMTIAQWRNLGYQNQPEHQAFAQLLEAPQEDAQMIIRDRFPVPRLVVCDQHGSQARFLLAKLNPSATYNNASEMNAGSDIIFTDDVSLQVFFQHLQKLAVQS.

Cys59, Cys62, Cys81, and Cys84 together coordinate Zn(2+). The zinc finger-like stretch occupies residues 59 to 84; it reads CRICTAALNPFARVDFLAKIWICPIC.

This sequence belongs to the SEC23/SEC24 family. SEC23 subfamily. In terms of assembly, component of the coat protein complex II (COPII), composed of at least five proteins: the Sec23/24 complex, the Sec13/31 complex and Sar1. Interacts with SEC24A.

It localises to the cytoplasmic vesicle. The protein localises to the COPII-coated vesicle membrane. Its subcellular location is the endoplasmic reticulum membrane. It is found in the membrane. In terms of biological role, component of the coat protein complex II (COPII) which promotes the formation of transport vesicles from the endoplasmic reticulum (ER). The coat has two main functions, the physical deformation of the endoplasmic reticulum membrane into vesicles and the selection of cargo molecules. The polypeptide is Protein transport protein SEC23 B (Arabidopsis thaliana (Mouse-ear cress)).